Consider the following 335-residue polypeptide: PA-phosphatase related-family protein DDB_G0275547 (335 aa).

6 helical membrane-spanning segments follow: residues Val43–Phe63, Val93–Val113, Ile124–Phe144, Ser202–Phe222, Gly226–Ile246, and His254–Tyr274.

It belongs to the PA-phosphatase related phosphoesterase family.

The protein localises to the membrane. This is PA-phosphatase related-family protein DDB_G0275547 from Dictyostelium discoideum (Social amoeba).